The primary structure comprises 41 residues: Large ribosomal subunit protein bL36 (41 aa).

It belongs to the bacterial ribosomal protein bL36 family.

The sequence is that of Large ribosomal subunit protein bL36 from Parvibaculum lavamentivorans (strain DS-1 / DSM 13023 / NCIMB 13966).